We begin with the raw amino-acid sequence, 942 residues long: Glutamyl aminopeptidase (942 aa).

Residues 1–14 (MSTDSKRYCIKTKH) are Cytoplasmic-facing. Residues 15–35 (VAIICAAVVAVGLIVGLSVGL) traverse the membrane as a helical; Signal-anchor for type II membrane protein segment. The Extracellular portion of the chain corresponds to 36 to 942 (TRSCDSKDGG…RDTIRDWFFN (907 aa)). The segment at 40 to 74 (DSKDGGQGTTQSPSHLPPTSSPPQDQGVCPASEDE) is disordered. Residues N110, N114, and N187 are each glycosylated (N-linked (GlcNAc...) asparagine). E213 lines the substrate pocket. N314 carries N-linked (GlcNAc...) asparagine glycosylation. Residue 347–351 (GAMEN) coordinates substrate. Residue N367 is glycosylated (N-linked (GlcNAc...) asparagine). Position 383 (H383) interacts with Zn(2+). The active-site Proton acceptor is the E384. The Zn(2+) site is built by H387 and E406. 9 N-linked (GlcNAc...) asparagine glycosylation sites follow: N557, N579, N587, N597, N632, N668, N753, N786, and N791. Position 877 (R877) interacts with substrate.

Belongs to the peptidase M1 family. As to quaternary structure, homodimer; disulfide-linked. Zn(2+) serves as cofactor.

Its subcellular location is the cell membrane. The enzyme catalyses Release of N-terminal glutamate (and to a lesser extent aspartate) from a peptide.. With respect to regulation, substrate specificity is modulated by calcium which enhances the enzymatic activity for cleavage of acidic residues while reducing its activity with basic residues. Inhibited by aminopeptidase inhibitors amastatin and bestatin. In terms of biological role, regulates central hypertension through its calcium-modulated preference to cleave N-terminal acidic residues from peptides such as angiotensin II. In Sus scrofa (Pig), this protein is Glutamyl aminopeptidase (ENPEP).